We begin with the raw amino-acid sequence, 597 residues long: Pentatricopeptide repeat-containing protein At2g21090 (597 aa).

PPR repeat units follow at residues 45–79 (PFDL…GFKR), 81–111 (NTLL…MHLR), 112–142 (NLYS…MPER), 143–177 (DVVS…GIKF), 178–212 (NEFS…GFLS), 213–243 (NVVL…MTVK), 244–274 (DIHI…MPEK), 275–309 (NPVS…GVKP), 310–344 (EQFT…NVRP), 345–375 (NAIV…CDDK), 377–411 (DCVF…RVQP), 412–447 (NRTT…GIVP), and 448–478 (DQEH…MPFE). Positions 483–558 (IWNAILGVCR…EKAVSWIEIE (76 aa)) are type E motif. Positions 559–591 (KKVEAFTVSDGSHAHARKEEIYFILHNLAAVIE) are type E(+) motif.

Belongs to the PPR family. PCMP-E subfamily.

In Arabidopsis thaliana (Mouse-ear cress), this protein is Pentatricopeptide repeat-containing protein At2g21090 (PCMP-E48).